Consider the following 383-residue polypeptide: Lipid-A-disaccharide synthase (383 aa).

This sequence belongs to the LpxB family.

It catalyses the reaction a lipid X + a UDP-2-N,3-O-bis[(3R)-3-hydroxyacyl]-alpha-D-glucosamine = a lipid A disaccharide + UDP + H(+). The protein operates within bacterial outer membrane biogenesis; LPS lipid A biosynthesis. Condensation of UDP-2,3-diacylglucosamine and 2,3-diacylglucosamine-1-phosphate to form lipid A disaccharide, a precursor of lipid A, a phosphorylated glycolipid that anchors the lipopolysaccharide to the outer membrane of the cell. The polypeptide is Lipid-A-disaccharide synthase (Myxococcus xanthus (strain DK1622)).